The primary structure comprises 397 residues: Probable inactive purple acid phosphatase 28 (397 aa).

The N-terminal stretch at 1–30 is a signal peptide; sequence MNCSIGNWKHTVLYLTLIVSLLYFIESLIS. N-linked (GlcNAc...) asparagine glycosylation is found at Asn-91 and Asn-209. Residues His-266 and His-314 each coordinate Zn(2+). 314–316 is a substrate binding site; sequence HDH. His-316 contributes to the Fe cation binding site.

This sequence belongs to the metallophosphoesterase superfamily. Purple acid phosphatase family. In terms of assembly, homodimer. The cofactor is Fe cation. Zn(2+) serves as cofactor. As to expression, expressed in roots, stems, leaves, flowers and siliques.

The protein resides in the secreted. In Arabidopsis thaliana (Mouse-ear cress), this protein is Probable inactive purple acid phosphatase 28 (PAP28).